A 368-amino-acid chain; its full sequence is Ribosomal RNA large subunit methyltransferase M (368 aa).

Residues S189, 222-225 (CPGG), D241, D261, and D278 each bind S-adenosyl-L-methionine. Catalysis depends on K307, which acts as the Proton acceptor.

This sequence belongs to the class I-like SAM-binding methyltransferase superfamily. RNA methyltransferase RlmE family. RlmM subfamily. In terms of assembly, monomer.

It localises to the cytoplasm. It carries out the reaction cytidine(2498) in 23S rRNA + S-adenosyl-L-methionine = 2'-O-methylcytidine(2498) in 23S rRNA + S-adenosyl-L-homocysteine + H(+). Its function is as follows. Catalyzes the 2'-O-methylation at nucleotide C2498 in 23S rRNA. The chain is Ribosomal RNA large subunit methyltransferase M from Yersinia enterocolitica serotype O:8 / biotype 1B (strain NCTC 13174 / 8081).